Reading from the N-terminus, the 322-residue chain is Outer membrane protein assembly factor BamC (322 aa).

The first 22 residues, 1–22 (MISLLAVAVLAGCSNPETRSQA), serve as a signal peptide directing secretion.

It belongs to the BamC family. In terms of assembly, part of the Bam complex.

It is found in the cell outer membrane. In terms of biological role, part of the outer membrane protein assembly complex, which is involved in assembly and insertion of beta-barrel proteins into the outer membrane. The polypeptide is Outer membrane protein assembly factor BamC (Oceanimonas sp. (strain GK1 / IBRC-M 10197)).